The primary structure comprises 128 residues: Large ribosomal subunit protein bL12 (128 aa).

Belongs to the bacterial ribosomal protein bL12 family. Homodimer. Part of the ribosomal stalk of the 50S ribosomal subunit. Forms a multimeric L10(L12)X complex, where L10 forms an elongated spine to which 2 to 4 L12 dimers bind in a sequential fashion. Binds GTP-bound translation factors.

Functionally, forms part of the ribosomal stalk which helps the ribosome interact with GTP-bound translation factors. Is thus essential for accurate translation. This chain is Large ribosomal subunit protein bL12, found in Brachyspira hyodysenteriae (strain ATCC 49526 / WA1).